The following is a 164-amino-acid chain: Transcription antitermination protein NusB (164 aa).

Belongs to the NusB family.

In terms of biological role, involved in transcription antitermination. Required for transcription of ribosomal RNA (rRNA) genes. Binds specifically to the boxA antiterminator sequence of the ribosomal RNA (rrn) operons. The sequence is that of Transcription antitermination protein NusB from Chlorobium limicola (strain DSM 245 / NBRC 103803 / 6330).